Here is a 445-residue protein sequence, read N- to C-terminus: Arabinooligosaccharide-binding protein (445 aa).

Residues 1-20 (MGKNILFFSFVGVMVLVLVA) form the signal peptide. A lipid anchor (N-palmitoyl cysteine) is attached at cysteine 21. Cysteine 21 is lipidated: S-diacylglycerol cysteine.

The protein belongs to the bacterial solute-binding protein 1 family. In terms of assembly, the complex is composed of two ATP-binding proteins (MsmX), two transmembrane proteins (AraP and AraQ) and a solute-binding protein (AraN).

It is found in the cell membrane. Its function is as follows. Part of the ABC transporter complex AraNPQ involved in the uptake of arabinooligosaccharides. AraN captures the substrate and delivers it to the two transmembrane components. This Halalkalibacterium halodurans (strain ATCC BAA-125 / DSM 18197 / FERM 7344 / JCM 9153 / C-125) (Bacillus halodurans) protein is Arabinooligosaccharide-binding protein (araN).